Here is a 332-residue protein sequence, read N- to C-terminus: DNA-directed RNA polymerase subunit alpha (332 aa).

The alpha N-terminal domain (alpha-NTD) stretch occupies residues methionine 1 to threonine 234. The alpha C-terminal domain (alpha-CTD) stretch occupies residues valine 248 to glycine 332.

Belongs to the RNA polymerase alpha chain family. As to quaternary structure, homodimer. The RNAP catalytic core consists of 2 alpha, 1 beta, 1 beta' and 1 omega subunit. When a sigma factor is associated with the core the holoenzyme is formed, which can initiate transcription.

The catalysed reaction is RNA(n) + a ribonucleoside 5'-triphosphate = RNA(n+1) + diphosphate. DNA-dependent RNA polymerase catalyzes the transcription of DNA into RNA using the four ribonucleoside triphosphates as substrates. The protein is DNA-directed RNA polymerase subunit alpha of Xylella fastidiosa (strain M23).